Here is a 494-residue protein sequence, read N- to C-terminus: 3-octaprenyl-4-hydroxybenzoate carboxy-lyase (494 aa).

A Mn(2+)-binding site is contributed by Asn172. Prenylated FMN-binding positions include 175-177, 189-191, and 194-195; these read IYR, RWL, and RG. Glu238 lines the Mn(2+) pocket. The Proton donor role is filled by Asp294.

Belongs to the UbiD family. Homohexamer. Prenylated FMN is required as a cofactor. It depends on Mn(2+) as a cofactor.

It localises to the cell membrane. It catalyses the reaction a 4-hydroxy-3-(all-trans-polyprenyl)benzoate + H(+) = a 2-(all-trans-polyprenyl)phenol + CO2. It participates in cofactor biosynthesis; ubiquinone biosynthesis. In terms of biological role, catalyzes the decarboxylation of 3-octaprenyl-4-hydroxy benzoate to 2-octaprenylphenol, an intermediate step in ubiquinone biosynthesis. The sequence is that of 3-octaprenyl-4-hydroxybenzoate carboxy-lyase from Herminiimonas arsenicoxydans.